Consider the following 130-residue polypeptide: Small ribosomal subunit protein uS9 (130 aa).

The protein belongs to the universal ribosomal protein uS9 family.

The chain is Small ribosomal subunit protein uS9 from Hydrogenovibrio crunogenus (strain DSM 25203 / XCL-2) (Thiomicrospira crunogena).